The chain runs to 655 residues: HDA1 complex subunit 3 (655 aa).

The stretch at 482 to 632 (HELEVENNLK…KTMDNLENLT (151 aa)) forms a coiled coil. The tract at residues 635-655 (RVRTQNGNTKKKSRAKKPGNV) is disordered. The span at 643-655 (TKKKSRAKKPGNV) shows a compositional bias: basic residues.

The protein belongs to the HDA2/3 family. HDA3 subfamily. As to quaternary structure, heterodimer with HDA2. Component of the HDA1 histone deacetylase complex composed of at least one HDA1 homodimer and one HDA2/HDA3 heterodimer. Interacts with HDA1 and HDA3.

It is found in the nucleus. Its function is as follows. Required for activity of HDA1 histone deacetylase complex. The HDA1 histone deacetylase complex is responsible for the deacetylation of lysine residues on the N-terminal part of the core histones (H2A, H2B, H3 and H4). Histone deacetylation gives a tag for epigenetic repression and plays an important role in transcriptional regulation, cell cycle progression and developmental events. The protein is HDA1 complex subunit 3 (HDA3) of Saccharomyces cerevisiae (strain ATCC 204508 / S288c) (Baker's yeast).